The following is a 326-amino-acid chain: Phospho-N-acetylmuramoyl-pentapeptide-transferase (326 aa).

A run of 10 helical transmembrane segments spans residues 4 to 24, 49 to 69, 74 to 94, 109 to 129, 151 to 171, 179 to 199, 203 to 223, 228 to 248, 254 to 274, and 303 to 323; these read IWVAFTVSLAVTLIAGPLVIP, TPTMGGIIFLAGTAAGGFLLI, GLIVLLMALGYGFIGFLDDYI, KLLGQVLLAAALAYWAVFEAG, LGWWPFLAFTVLLVVFMSNAV, GLAAGVSMLVALALVPVALAA, GVAAGMAALAGGCLGFLFFNF, VFMGDTGSLALGGGLCAAAVV, LFLIIGGIYVLEALSVIIQVI, and VVITFWALTLVFAAAGLAGLY.

The protein belongs to the glycosyltransferase 4 family. MraY subfamily. It depends on Mg(2+) as a cofactor.

The protein localises to the cell membrane. It catalyses the reaction UDP-N-acetyl-alpha-D-muramoyl-L-alanyl-gamma-D-glutamyl-meso-2,6-diaminopimeloyl-D-alanyl-D-alanine + di-trans,octa-cis-undecaprenyl phosphate = di-trans,octa-cis-undecaprenyl diphospho-N-acetyl-alpha-D-muramoyl-L-alanyl-D-glutamyl-meso-2,6-diaminopimeloyl-D-alanyl-D-alanine + UMP. The protein operates within cell wall biogenesis; peptidoglycan biosynthesis. Its function is as follows. Catalyzes the initial step of the lipid cycle reactions in the biosynthesis of the cell wall peptidoglycan: transfers peptidoglycan precursor phospho-MurNAc-pentapeptide from UDP-MurNAc-pentapeptide onto the lipid carrier undecaprenyl phosphate, yielding undecaprenyl-pyrophosphoryl-MurNAc-pentapeptide, known as lipid I. This chain is Phospho-N-acetylmuramoyl-pentapeptide-transferase, found in Pelotomaculum thermopropionicum (strain DSM 13744 / JCM 10971 / SI).